The sequence spans 216 residues: Oligoribonuclease (216 aa).

The region spanning V6 to L171 is the Exonuclease domain. Residue Y128 is part of the active site.

Belongs to the oligoribonuclease family.

It localises to the cytoplasm. Its function is as follows. 3'-to-5' exoribonuclease specific for small oligoribonucleotides. This is Oligoribonuclease from Nocardia farcinica (strain IFM 10152).